A 120-amino-acid polypeptide reads, in one-letter code: Ribosome-binding factor A (120 aa).

This sequence belongs to the RbfA family. As to quaternary structure, monomer. Binds 30S ribosomal subunits, but not 50S ribosomal subunits or 70S ribosomes.

The protein resides in the cytoplasm. One of several proteins that assist in the late maturation steps of the functional core of the 30S ribosomal subunit. Associates with free 30S ribosomal subunits (but not with 30S subunits that are part of 70S ribosomes or polysomes). Required for efficient processing of 16S rRNA. May interact with the 5'-terminal helix region of 16S rRNA. The polypeptide is Ribosome-binding factor A (Rickettsia peacockii (strain Rustic)).